We begin with the raw amino-acid sequence, 472 residues long: Carbohydrate sulfotransferase 3 (472 aa).

Over 1 to 19 (MEKGLALPQDFRDLVHSLK) the chain is Cytoplasmic. The chain crosses the membrane as a helical; Signal-anchor for type II membrane protein span at residues 20 to 38 (IRGRYVLFLAFVVIVFIFI). Residues 39–472 (EKENKIISRV…LEERGTFWVT (434 aa)) lie on the Lumenal side of the membrane. N-linked (GlcNAc...) asparagine glycans are attached at residues asparagine 63, asparagine 74, and asparagine 96. 135-141 (TRTGSSF) is a 3'-phosphoadenylyl sulfate binding site. A glycan (N-linked (GlcNAc...) asparagine) is linked at asparagine 250. 3'-phosphoadenylyl sulfate is bound at residue 295-303 (RDPRAVLAS). 2 N-linked (GlcNAc...) asparagine glycosylation sites follow: asparagine 413 and asparagine 457.

The protein belongs to the sulfotransferase 1 family. Gal/GlcNAc/GalNAc subfamily. Post-translationally, N-glycosylated. As to expression, widely expressed. Highly expressed in spleen, lung, eye and stomach. Constitutively expressed at low level during the mid- to late-gestation period. Expressed in the brain in a temporally controlled manner: peaks at 2 weeks after birth in the cerebellum, but at 3 weeks in the cerebrum. Localizes to stromal cells in the bone marrow, and stromal cells in the marginal zone and red pulp of the spleen, but the sense probe did not.

The protein localises to the golgi apparatus membrane. The catalysed reaction is chondroitin beta-D-glucuronate + n 3'-phosphoadenylyl sulfate = chondroitin 6'-sulfate + n adenosine 3',5'-bisphosphate + n H(+). It carries out the reaction 3'-phosphoadenylyl sulfate + keratan = adenosine 3',5'-bisphosphate + keratan 6'-sulfate.. In terms of biological role, sulfotransferase that utilizes 3'-phospho-5'-adenylyl sulfate (PAPS) as sulfonate donor to catalyze the transfer of sulfate to position 6 of the N-acetylgalactosamine (GalNAc) residue of chondroitin. Chondroitin sulfate constitutes the predominant proteoglycan present in cartilage and is distributed on the surfaces of many cells and extracellular matrices. Catalyzes with a lower efficiency the sulfation of Gal residues of keratan sulfate, another glycosaminoglycan. Can also catalyze the sulfation of the Gal residues in sialyl N-acetyllactosamine (sialyl LacNAc) oligosaccharides. May play a role in the maintenance of naive T-lymphocytes in the spleen. The sequence is that of Carbohydrate sulfotransferase 3 (Chst3) from Mus musculus (Mouse).